The sequence spans 393 residues: NADH-quinone oxidoreductase subunit H 2 (393 aa).

The next 10 helical transmembrane spans lie at Val-13–Val-33, Ala-79–Ile-99, Val-112–Gly-132, Leu-158–Val-178, Val-186–Ala-206, Leu-240–Phe-260, Leu-278–Ile-298, Val-309–Val-329, Met-333–Phe-353, and Ile-368–Gly-388.

The protein belongs to the complex I subunit 1 family. NDH-1 is composed of 14 different subunits. Subunits NuoA, H, J, K, L, M, N constitute the membrane sector of the complex.

The protein localises to the cell inner membrane. The enzyme catalyses a quinone + NADH + 5 H(+)(in) = a quinol + NAD(+) + 4 H(+)(out). Functionally, NDH-1 shuttles electrons from NADH, via FMN and iron-sulfur (Fe-S) centers, to quinones in the respiratory chain. The immediate electron acceptor for the enzyme in this species is believed to be ubiquinone. Couples the redox reaction to proton translocation (for every two electrons transferred, four hydrogen ions are translocated across the cytoplasmic membrane), and thus conserves the redox energy in a proton gradient. This subunit may bind ubiquinone. This Solibacter usitatus (strain Ellin6076) protein is NADH-quinone oxidoreductase subunit H 2.